A 326-amino-acid polypeptide reads, in one-letter code: NAD-dependent protein deacylase SIR5 (326 aa).

The transit peptide at 1–26 (MRLLRPTPRLSSIFSSKTATSNLRFF) directs the protein to the mitochondrion. A Deacetylase sirtuin-type domain is found at 28-324 (AMAPHNDVGA…IGKLETDKKE (297 aa)). 53 to 72 (GAGLSASSGLPTFRGAGGLW) contacts NAD(+). Residues Tyr97 and Arg100 each coordinate substrate. Catalysis depends on His151, which acts as the Proton acceptor. Zn(2+) contacts are provided by Cys159, Cys162, Cys211, and Cys214.

The protein belongs to the sirtuin family. Class I subfamily. As to quaternary structure, interacts with LAT1; the interaction is direct. It depends on Zn(2+) as a cofactor.

Its subcellular location is the mitochondrion. It localises to the cytoplasm. It is found in the cytosol. The protein localises to the nucleus. The protein resides in the chromosome. The enzyme catalyses N(6)-acetyl-L-lysyl-[protein] + NAD(+) + H2O = 2''-O-acetyl-ADP-D-ribose + nicotinamide + L-lysyl-[protein]. It catalyses the reaction N(6)-(2E)-butenoyl-L-lysyl-[protein] + H2O = (2E)-2-butenoate + L-lysyl-[protein]. Its function is as follows. NAD-dependent protein-lysine deacylase that decrotonylates the PDC (pyruvate dehydrogenase complex) subunit LAT1 at 'Lys-148' to inhibit PDC activity and consequently ATP production. Also decrotonylates histone H3 crotonylated at 'Lys-18' (H3K18cr), to repress the expression of genes involved in aerobic respiration. May also act as a NAD-dependent deacetylase. Does not mediate desuccinylation, demalonylation, or deglutarylation of LAT1. In Fusarium oxysporum f. sp. lycopersici (strain 4287 / CBS 123668 / FGSC 9935 / NRRL 34936) (Fusarium vascular wilt of tomato), this protein is NAD-dependent protein deacylase SIR5.